The chain runs to 81 residues: ATP synthase subunit c (81 aa).

Transmembrane regions (helical) follow at residues 6-26 (AAASVIAAALAVGLAAIGPGF) and 57-77 (LAFMESLTIYGLVIALVLLFA).

Belongs to the ATPase C chain family. In terms of assembly, F-type ATPases have 2 components, F(1) - the catalytic core - and F(0) - the membrane proton channel. F(1) has five subunits: alpha(3), beta(3), gamma(1), delta(1), epsilon(1). F(0) has four main subunits: a(1), b(1), b'(1) and c(10-14). The alpha and beta chains form an alternating ring which encloses part of the gamma chain. F(1) is attached to F(0) by a central stalk formed by the gamma and epsilon chains, while a peripheral stalk is formed by the delta, b and b' chains.

The protein localises to the cellular thylakoid membrane. Functionally, f(1)F(0) ATP synthase produces ATP from ADP in the presence of a proton or sodium gradient. F-type ATPases consist of two structural domains, F(1) containing the extramembraneous catalytic core and F(0) containing the membrane proton channel, linked together by a central stalk and a peripheral stalk. During catalysis, ATP synthesis in the catalytic domain of F(1) is coupled via a rotary mechanism of the central stalk subunits to proton translocation. Key component of the F(0) channel; it plays a direct role in translocation across the membrane. A homomeric c-ring of between 10-14 subunits forms the central stalk rotor element with the F(1) delta and epsilon subunits. This Rippkaea orientalis (strain PCC 8801 / RF-1) (Cyanothece sp. (strain PCC 8801)) protein is ATP synthase subunit c.